The sequence spans 213 residues: LexA repressor (213 aa).

Residues 31–51 constitute a DNA-binding region (H-T-H motif); sequence RAEISRELGFRSPNAAEEYLK. Residues Ser129 and Lys166 each act as for autocatalytic cleavage activity in the active site.

Belongs to the peptidase S24 family. In terms of assembly, homodimer.

It catalyses the reaction Hydrolysis of Ala-|-Gly bond in repressor LexA.. Functionally, represses a number of genes involved in the response to DNA damage (SOS response), including recA and lexA. In the presence of single-stranded DNA, RecA interacts with LexA causing an autocatalytic cleavage which disrupts the DNA-binding part of LexA, leading to derepression of the SOS regulon and eventually DNA repair. This is LexA repressor from Mannheimia succiniciproducens (strain KCTC 0769BP / MBEL55E).